Here is a 710-residue protein sequence, read N- to C-terminus: Pentatricopeptide repeat-containing protein At3g14330 (710 aa).

PPR repeat units follow at residues 166–196, 200–234, 235–269, 270–304, 305–331, 336–370, 371–401, 402–436, 437–467, and 473–503; these read NPKL…VTDS, TEKV…FIEP, GNFS…KEKV, DQVV…NVVT, WNSL…MQEE, SWAT…KEKP, DVPL…MLTK, DLAS…GVAP, DGIT…MKTE, and ALEH…MPFK. The type E motif stretch occupies residues 508–583; it reads IWGSLLNSCR…EAGCSWVQVK (76 aa). Residues 584–615 are type E(+) motif; sequence DKIQIFVAGGGYEFRNSDEYKKVWTELQEAIE. Positions 616 to 710 are type DYW motif; that stretch reads KSGYSPNTSV…DGICSCKDYW (95 aa).

Belongs to the PPR family. PCMP-H subfamily.

The chain is Pentatricopeptide repeat-containing protein At3g14330 (PCMP-H57) from Arabidopsis thaliana (Mouse-ear cress).